The chain runs to 168 residues: 6,7-dimethyl-8-ribityllumazine synthase (168 aa).

5-amino-6-(D-ribitylamino)uracil-binding positions include Phe-24, 58 to 60 (ALE), and 82 to 84 (AVI). Residue 87-88 (ET) coordinates (2S)-2-hydroxy-3-oxobutyl phosphate. The Proton donor role is filled by His-90. Asn-115 is a 5-amino-6-(D-ribitylamino)uracil binding site. Arg-129 serves as a coordination point for (2S)-2-hydroxy-3-oxobutyl phosphate.

The protein belongs to the DMRL synthase family.

The catalysed reaction is (2S)-2-hydroxy-3-oxobutyl phosphate + 5-amino-6-(D-ribitylamino)uracil = 6,7-dimethyl-8-(1-D-ribityl)lumazine + phosphate + 2 H2O + H(+). It participates in cofactor biosynthesis; riboflavin biosynthesis; riboflavin from 2-hydroxy-3-oxobutyl phosphate and 5-amino-6-(D-ribitylamino)uracil: step 1/2. In terms of biological role, catalyzes the formation of 6,7-dimethyl-8-ribityllumazine by condensation of 5-amino-6-(D-ribitylamino)uracil with 3,4-dihydroxy-2-butanone 4-phosphate. This is the penultimate step in the biosynthesis of riboflavin. In Paraburkholderia xenovorans (strain LB400), this protein is 6,7-dimethyl-8-ribityllumazine synthase.